We begin with the raw amino-acid sequence, 171 residues long: Co-chaperone protein HscB (171 aa).

Positions 2–74 (DYFTLFGLPA…LTRAEYLLSL (73 aa)) constitute a J domain.

The protein belongs to the HscB family. Interacts with HscA and stimulates its ATPase activity. Interacts with IscU.

In terms of biological role, co-chaperone involved in the maturation of iron-sulfur cluster-containing proteins. Seems to help targeting proteins to be folded toward HscA. This is Co-chaperone protein HscB from Salmonella heidelberg (strain SL476).